Reading from the N-terminus, the 223-residue chain is Translation initiation factor 6 (223 aa).

It belongs to the eIF-6 family.

Binds to the 50S ribosomal subunit and prevents its association with the 30S ribosomal subunit to form the 70S initiation complex. The protein is Translation initiation factor 6 of Methanobrevibacter smithii (strain ATCC 35061 / DSM 861 / OCM 144 / PS).